The sequence spans 221 residues: Leucyl/phenylalanyl-tRNA--protein transferase (221 aa).

Belongs to the L/F-transferase family.

The protein resides in the cytoplasm. It catalyses the reaction N-terminal L-lysyl-[protein] + L-leucyl-tRNA(Leu) = N-terminal L-leucyl-L-lysyl-[protein] + tRNA(Leu) + H(+). The catalysed reaction is N-terminal L-arginyl-[protein] + L-leucyl-tRNA(Leu) = N-terminal L-leucyl-L-arginyl-[protein] + tRNA(Leu) + H(+). The enzyme catalyses L-phenylalanyl-tRNA(Phe) + an N-terminal L-alpha-aminoacyl-[protein] = an N-terminal L-phenylalanyl-L-alpha-aminoacyl-[protein] + tRNA(Phe). Functions in the N-end rule pathway of protein degradation where it conjugates Leu, Phe and, less efficiently, Met from aminoacyl-tRNAs to the N-termini of proteins containing an N-terminal arginine or lysine. This Phenylobacterium zucineum (strain HLK1) protein is Leucyl/phenylalanyl-tRNA--protein transferase.